The following is a 426-amino-acid chain: Enolase (426 aa).

Glutamine 163 serves as a coordination point for (2R)-2-phosphoglycerate. The active-site Proton donor is the glutamate 205. 3 residues coordinate Mg(2+): aspartate 242, glutamate 285, and aspartate 312. (2R)-2-phosphoglycerate contacts are provided by lysine 337, arginine 366, serine 367, and lysine 388. Lysine 337 functions as the Proton acceptor in the catalytic mechanism.

The protein belongs to the enolase family. The cofactor is Mg(2+).

It is found in the cytoplasm. The protein localises to the secreted. Its subcellular location is the cell surface. It catalyses the reaction (2R)-2-phosphoglycerate = phosphoenolpyruvate + H2O. The protein operates within carbohydrate degradation; glycolysis; pyruvate from D-glyceraldehyde 3-phosphate: step 4/5. Its function is as follows. Catalyzes the reversible conversion of 2-phosphoglycerate (2-PG) into phosphoenolpyruvate (PEP). It is essential for the degradation of carbohydrates via glycolysis. The sequence is that of Enolase from Desulfosudis oleivorans (strain DSM 6200 / JCM 39069 / Hxd3) (Desulfococcus oleovorans).